We begin with the raw amino-acid sequence, 534 residues long: NAD(P)H-quinone oxidoreductase chain 4 (534 aa).

Helical transmembrane passes span F12–F32, F44–F64, I94–W114, P120–V140, L144–W164, F176–F196, I220–H240, T251–L271, F285–F305, I314–S334, A340–A360, F384–V404, V425–M445, and V472–V492.

This sequence belongs to the complex I subunit 4 family.

The protein localises to the cellular thylakoid membrane. The catalysed reaction is a plastoquinone + NADH + (n+1) H(+)(in) = a plastoquinol + NAD(+) + n H(+)(out). The enzyme catalyses a plastoquinone + NADPH + (n+1) H(+)(in) = a plastoquinol + NADP(+) + n H(+)(out). NDH-1 shuttles electrons from NAD(P)H, via FMN and iron-sulfur (Fe-S) centers, to quinones in the respiratory chain. The immediate electron acceptor for the enzyme in this species is believed to be plastoquinone. Couples the redox reaction to proton translocation (for every two electrons transferred, four hydrogen ions are translocated across the cytoplasmic membrane), and thus conserves the redox energy in a proton gradient. This Prochlorococcus marinus (strain MIT 9312) protein is NAD(P)H-quinone oxidoreductase chain 4.